Reading from the N-terminus, the 346-residue chain is GTPase Obg (346 aa).

The Obg domain maps to 1–159; sequence MQFVDEANIR…RNLGLELSVL (159 aa). Positions 127–149 are disordered; that stretch reads NVHFKSSTNRTPRQCTPGEPGDE. Residues 130 to 140 show a composition bias toward polar residues; sequence FKSSTNRTPRQ. The OBG-type G domain maps to 160–333; that stretch reads ADVGLLGMPN…LVKEVAYGLE (174 aa). Residues 166–173, 191–195, 213–216, 283–286, and 314–316 each bind GTP; these read GMPNAGKS, FTTLY, DIPG, NKTD, and SAV. Mg(2+) contacts are provided by Ser-173 and Thr-193.

Belongs to the TRAFAC class OBG-HflX-like GTPase superfamily. OBG GTPase family. Monomer. Mg(2+) serves as cofactor.

Its subcellular location is the cytoplasm. An essential GTPase which binds GTP, GDP and possibly (p)ppGpp with moderate affinity, with high nucleotide exchange rates and a fairly low GTP hydrolysis rate. Plays a role in control of the cell cycle, stress response, ribosome biogenesis and in those bacteria that undergo differentiation, in morphogenesis control. The sequence is that of GTPase Obg from Hydrogenovibrio crunogenus (strain DSM 25203 / XCL-2) (Thiomicrospira crunogena).